The primary structure comprises 191 residues: FMN reductase (NADH) RutF (191 aa).

It belongs to the non-flavoprotein flavin reductase family. RutF subfamily.

The catalysed reaction is FMNH2 + NAD(+) = FMN + NADH + 2 H(+). Catalyzes the reduction of FMN to FMNH2 which is used to reduce pyrimidine by RutA via the Rut pathway. This chain is FMN reductase (NADH) RutF, found in Escherichia coli O1:K1 / APEC.